We begin with the raw amino-acid sequence, 716 residues long: 1,4-alpha-glucan branching enzyme GlgB (716 aa).

Aspartate 399 functions as the Nucleophile in the catalytic mechanism. Catalysis depends on glutamate 452, which acts as the Proton donor.

The protein belongs to the glycosyl hydrolase 13 family. GlgB subfamily. In terms of assembly, monomer.

The catalysed reaction is Transfers a segment of a (1-&gt;4)-alpha-D-glucan chain to a primary hydroxy group in a similar glucan chain.. Its pathway is glycan biosynthesis; glycogen biosynthesis. Its function is as follows. Catalyzes the formation of the alpha-1,6-glucosidic linkages in glycogen by scission of a 1,4-alpha-linked oligosaccharide from growing alpha-1,4-glucan chains and the subsequent attachment of the oligosaccharide to the alpha-1,6 position. The protein is 1,4-alpha-glucan branching enzyme GlgB of Rhodopseudomonas palustris (strain HaA2).